The following is a 95-amino-acid chain: Small ribosomal subunit protein bS6 (95 aa).

The protein belongs to the bacterial ribosomal protein bS6 family.

In terms of biological role, binds together with bS18 to 16S ribosomal RNA. This is Small ribosomal subunit protein bS6 from Clostridium acetobutylicum (strain ATCC 824 / DSM 792 / JCM 1419 / IAM 19013 / LMG 5710 / NBRC 13948 / NRRL B-527 / VKM B-1787 / 2291 / W).